Consider the following 401-residue polypeptide: Deacetoxyvindoline 4-hydroxylase (401 aa).

Residues 242-345 (CAEGLILLGH…SVAVAFGIKT (104 aa)) form the Fe2OG dioxygenase domain. Fe cation contacts are provided by His-268, Asp-270, and His-324. 2-oxoglutarate is bound at residue Arg-334.

The protein belongs to the iron/ascorbate-dependent oxidoreductase family. As to quaternary structure, monomer. Fe cation serves as cofactor. L-ascorbate is required as a cofactor. Highest levels in leaves, lower levels in stems and fruits. Not expressed in flowers and roots.

The protein resides in the cytoplasm. It localises to the nucleus. It carries out the reaction deacetoxyvindoline + 2-oxoglutarate + O2 = 4-O-deacetylvindoline + succinate + CO2. It participates in alkaloid biosynthesis; vindoline biosynthesis. Catalyzes the C4-hydroxylation of desacetoxyvindoline. In Catharanthus roseus (Madagascar periwinkle), this protein is Deacetoxyvindoline 4-hydroxylase.